Here is a 416-residue protein sequence, read N- to C-terminus: cAMP-dependent protein kinase type II-beta regulatory subunit (416 aa).

The interval 2-151 is dimerization and phosphorylation; that stretch reads SIEIPAGLTE…RLQEACKDIL (150 aa). Positions 53–97 are disordered; sequence HEGRTWGDAGAAAGGGTPSKGVNFAEEPMRSDSENGEEEEAAEAG. A Phosphothreonine modification is found at Thr-69. Residues Ser-83, Ser-85, and Ser-112 each carry the phosphoserine modification. Residues 152–273, Glu-221, Arg-230, 274–416, Glu-350, and Arg-359 each bind 3',5'-cyclic AMP; these read LFKN…ESLP and FLKS…EPTA.

It belongs to the cAMP-dependent kinase regulatory chain family. The inactive form of the enzyme is composed of two regulatory chains and two catalytic chains. Activation by cAMP produces two active catalytic monomers and a regulatory dimer that binds four cAMP molecules. Interacts with PRKACA and PRKACB. Interacts with the phosphorylated form of PJA2. Forms a complex composed of PRKAR2B, GSK3B and GSKIP through GSKIP interaction; facilitates PKA-induced phosphorylation and regulates GSK3B activity. In terms of processing, phosphorylated by the activated catalytic chain. In terms of tissue distribution, four types of regulatory chains are found: I-alpha, I-beta, II-alpha, and II-beta. Their expression varies among tissues and is in some cases constitutive and in others inducible. Brain. Present in a few pyramidal neurons and mostly in mossy fibers. Colocalizes with PJA2 in dentate granule cells and at postsynaptic sites of primary hippocampal neurons.

It localises to the cytoplasm. Its subcellular location is the cell membrane. Regulatory subunit of the cAMP-dependent protein kinases involved in cAMP signaling in cells. Type II regulatory chains mediate membrane association by binding to anchoring proteins, including the MAP2 kinase. In Rattus norvegicus (Rat), this protein is cAMP-dependent protein kinase type II-beta regulatory subunit (Prkar2b).